A 208-amino-acid chain; its full sequence is MKFLLIACLAVPAILAQQTSAPGGNLCTYPPQGDESNQKAVPIQDFRTSGLDFVRPNWCITHCADRKSVKAAVRFQFANQSTAVPTYKVRRTFTRYSGMKVHAELISGNPTKRDDDPFNFCMDDAVSAQIDTIVNTYNDIETMSEALNFYINKPGWAYIIYDMGVPPSIIETDNVKHDMNYCEKSSNKQMPDGTYMTYQVFAGLIKAN.

The signal sequence occupies residues 1-16; sequence MKFLLIACLAVPAILA. Asn-79 carries an N-linked (GlcNAc...) asparagine glycan.

This is an uncharacterized protein from Caenorhabditis elegans.